Consider the following 420-residue polypeptide: ATP phosphoribosyltransferase regulatory subunit (420 aa).

Belongs to the class-II aminoacyl-tRNA synthetase family. HisZ subfamily. Heteromultimer composed of HisG and HisZ subunits.

It localises to the cytoplasm. The protein operates within amino-acid biosynthesis; L-histidine biosynthesis; L-histidine from 5-phospho-alpha-D-ribose 1-diphosphate: step 1/9. Functionally, required for the first step of histidine biosynthesis. May allow the feedback regulation of ATP phosphoribosyltransferase activity by histidine. The sequence is that of ATP phosphoribosyltransferase regulatory subunit from Bacillus cereus (strain ZK / E33L).